A 336-amino-acid polypeptide reads, in one-letter code: ATP-dependent 6-phosphofructokinase (336 aa).

Residue G11 coordinates ATP. 21–25 (RAVVR) provides a ligand contact to ADP. Residues 72 to 73 (RY) and 102 to 105 (GDGS) each bind ATP. D103 is a binding site for Mg(2+). 125–127 (TID) contacts substrate. D127 (proton acceptor) is an active-site residue. Position 154 (R154) interacts with ADP. Substrate-binding positions include R162 and 169 to 171 (MGR). Residues 185–187 (GAD), K211, and 213–215 (KKH) contribute to the ADP site. Substrate is bound by residues E222, R244, and 250–253 (HIQR).

Belongs to the phosphofructokinase type A (PFKA) family. ATP-dependent PFK group I subfamily. Prokaryotic clade 'B1' sub-subfamily. As to quaternary structure, homotetramer. It depends on Mg(2+) as a cofactor.

Its subcellular location is the cytoplasm. It carries out the reaction beta-D-fructose 6-phosphate + ATP = beta-D-fructose 1,6-bisphosphate + ADP + H(+). The protein operates within carbohydrate degradation; glycolysis; D-glyceraldehyde 3-phosphate and glycerone phosphate from D-glucose: step 3/4. With respect to regulation, allosterically activated by ADP and other diphosphonucleosides, and allosterically inhibited by phosphoenolpyruvate. Functionally, catalyzes the phosphorylation of D-fructose 6-phosphate to fructose 1,6-bisphosphate by ATP, the first committing step of glycolysis. This is ATP-dependent 6-phosphofructokinase from Streptococcus suis (strain 05ZYH33).